The primary structure comprises 598 residues: Serine hydroxymethyltransferase 7 (598 aa).

The segment at 57-85 is disordered; the sequence is QLLEQKAEKTTTVDEPKKDGGGGGDQKED. Residues 61–85 are compositionally biased toward basic and acidic residues; sequence QKAEKTTTVDEPKKDGGGGGDQKED. The residue at position 370 (lysine 370) is an N6-(pyridoxal phosphate)lysine.

It belongs to the SHMT family. As to quaternary structure, homotetramer. Pyridoxal 5'-phosphate is required as a cofactor.

The protein localises to the cytoplasm. The catalysed reaction is (6R)-5,10-methylene-5,6,7,8-tetrahydrofolate + glycine + H2O = (6S)-5,6,7,8-tetrahydrofolate + L-serine. The protein operates within one-carbon metabolism; tetrahydrofolate interconversion. Functionally, catalyzes the interconversion of serine and glycine. The sequence is that of Serine hydroxymethyltransferase 7 (SHM7) from Arabidopsis thaliana (Mouse-ear cress).